The chain runs to 360 residues: Meiotic drive suppressor wtf13 (360 aa).

2 stretches are compositionally biased toward polar residues: residues 1 to 10 (MKNNYTSLKS) and 58 to 70 (DSST…TNPN). Disordered stretches follow at residues 1–20 (MKNN…ELKT) and 37–75 (EEEG…ERRQ). Transmembrane regions (helical) follow at residues 90 to 110 (LLIS…CVNP), 120 to 140 (AFSV…FCFF), 150 to 170 (CIKV…ISLA), 186 to 206 (DLVV…FGCV), 222 to 242 (SSIS…IWTL), 246 to 266 (LFGL…TKGL), 276 to 296 (ATGY…LFFY), and 310 to 330 (FIGN…RGIA).

Belongs to the WTF family. Homomer. Interacts with other proteins that exhibit high sequence similarity.

The protein resides in the spore membrane. Its subcellular location is the vacuole membrane. In terms of biological role, acts as a suppressor component of the dual wtf meiotic drive system, and can suppress but not confer meiotic drive by compatible poisons. Wtf meiotic drive systems promote unequal transmission of alleles from the parental zygote to progeny spores by encoding a poison and an antidote from the same locus; the poison is trans-acting and forms toxic aggregates in all spores within an ascus, wherease the antidote is spore-specific and targets aggregates for degradation by the vacuole. Meiotic drive by wtf systems therefore lead to poisoning of all progeny that do not inherit the dual poison/antidote allele, or express a compatible antidote. The chain is Meiotic drive suppressor wtf13 from Schizosaccharomyces kambucha (Fission yeast).